Reading from the N-terminus, the 275-residue chain is Large ribosomal subunit protein uL2 (275 aa).

Positions 210–275 (GRNRHRGIRP…DKLIISRKKK (66 aa)) are disordered. The span at 257-275 (FKTRKKKASDKLIISRKKK) shows a compositional bias: basic residues.

This sequence belongs to the universal ribosomal protein uL2 family. In terms of assembly, part of the 50S ribosomal subunit. Forms a bridge to the 30S subunit in the 70S ribosome.

In terms of biological role, one of the primary rRNA binding proteins. Required for association of the 30S and 50S subunits to form the 70S ribosome, for tRNA binding and peptide bond formation. It has been suggested to have peptidyltransferase activity; this is somewhat controversial. Makes several contacts with the 16S rRNA in the 70S ribosome. The chain is Large ribosomal subunit protein uL2 from Helicobacter hepaticus (strain ATCC 51449 / 3B1).